A 232-amino-acid chain; its full sequence is Flagellar L-ring protein (232 aa).

The first 15 residues, 1–15 (MKKVLFYVLPFAFFG), serve as a signal peptide directing secretion. Residue cysteine 16 is the site of N-palmitoyl cysteine attachment. Cysteine 16 carries S-diacylglycerol cysteine lipidation.

It belongs to the FlgH family. The basal body constitutes a major portion of the flagellar organelle and consists of four rings (L,P,S, and M) mounted on a central rod.

It is found in the cell outer membrane. Its subcellular location is the bacterial flagellum basal body. Its function is as follows. Assembles around the rod to form the L-ring and probably protects the motor/basal body from shearing forces during rotation. In Campylobacter jejuni subsp. doylei (strain ATCC BAA-1458 / RM4099 / 269.97), this protein is Flagellar L-ring protein.